Here is a 340-residue protein sequence, read N- to C-terminus: Spermidine synthase 2 (340 aa).

Residues 1 to 41 (MSSTQEASVTDLPVKRPREAEEDNNGGAMETENGGGEIKEP) form a disordered region. S2 is modified (N-acetylserine). The region spanning 49–286 (PGWFSEISPM…GVIGFMLCSS (238 aa)) is the PABS domain. S-adenosyl 3-(methylsulfanyl)propylamine is bound at residue Q80. Residue Y110 participates in putrescine binding. Residues Q111, D135, E155, 186–187 (DG), and D205 each bind S-adenosyl 3-(methylsulfanyl)propylamine. D205 functions as the Proton acceptor in the catalytic mechanism. Residues 205 to 208 (DSSD) and Y274 contribute to the putrescine site.

The protein belongs to the spermidine/spermine synthase family. As to quaternary structure, heterodimer. Component of a multiprotein complex. Interacts with SPMS and SPDSYN1.

The catalysed reaction is S-adenosyl 3-(methylsulfanyl)propylamine + putrescine = S-methyl-5'-thioadenosine + spermidine + H(+). The protein operates within amine and polyamine biosynthesis; spermidine biosynthesis; spermidine from putrescine: step 1/1. This chain is Spermidine synthase 2 (SPDSYN2), found in Arabidopsis thaliana (Mouse-ear cress).